The chain runs to 33 residues: Dolabellanin-B2 (33 aa).

In terms of processing, contains two disulfide bonds. Up to two of the methionines may be oxidized to methionine sulfoxides.

It is found in the secreted. Its function is as follows. Has antibacterial activity against Gram-negative bacteria E.coli JM109 and DH5-alpha, H.influenza IID 983, and V.vulnificus RIMD 2219009. Has antibacterial activity against Gram-positive bacteria S.aureus IID 1677, B.subtilis RIMD 0225014 and L.monocytogenes VIU206. Possesses antifungal activity against S.cerevisiae A581A, S.pombe IFO 1628, C.albicans ATCC 36232 and TIMM-1623, and C.tropicalis TIMM-0313. The polypeptide is Dolabellanin-B2 (Dolabella auricularia (Shoulderblade sea cat)).